The chain runs to 183 residues: UPF0397 protein stu0306/stu0307 (183 aa).

Helical transmembrane passes span 11–31 (ATGI…IPIF), 44–64 (VLFS…GFIG), 74–94 (GDIS…IGLF), 111–131 (IWFN…VTPI), and 149–169 (FVAG…LLAI).

This sequence belongs to the UPF0397 family.

It localises to the cell membrane. The sequence is that of UPF0397 protein stu0306/stu0307 from Streptococcus thermophilus (strain ATCC BAA-250 / LMG 18311).